The following is a 359-amino-acid chain: Peptide chain release factor 1 (359 aa).

At Gln236 the chain carries N5-methylglutamine.

It belongs to the prokaryotic/mitochondrial release factor family. In terms of processing, methylated by PrmC. Methylation increases the termination efficiency of RF1.

It localises to the cytoplasm. Its function is as follows. Peptide chain release factor 1 directs the termination of translation in response to the peptide chain termination codons UAG and UAA. The polypeptide is Peptide chain release factor 1 (prfA) (Mycoplasma genitalium (strain ATCC 33530 / DSM 19775 / NCTC 10195 / G37) (Mycoplasmoides genitalium)).